The chain runs to 256 residues: Hemolymph lipopolysaccharide-binding protein (256 aa).

An N-terminal signal peptide occupies residues 1–21 (MMNTRALLPLSVLLMATLCLC). Positions 22–33 (ELPIPILQRFVR) are excised as a propeptide. An N-linked (GlcNAc...) asparagine glycan is attached at N56. The region spanning 146–256 (IICQQEGGHL…KLPFVCEVEL (111 aa)) is the C-type lectin domain. Intrachain disulfides connect C148–C252 and C230–C244.

As to expression, hemolymph.

It localises to the secreted. In terms of biological role, participates probably in the elimination of foreign substances invading the insect abdominal cavity, and in trapping intracellular symbionts, when they leak from the mycetomes into the hemolymph. The polypeptide is Hemolymph lipopolysaccharide-binding protein (Periplaneta americana (American cockroach)).